A 316-amino-acid polypeptide reads, in one-letter code: Glycerol-3-phosphate dehydrogenase [NAD(P)+] (316 aa).

The NADPH site is built by Ser-14, Phe-15, Arg-35, and Lys-109. Positions 109 and 137 each coordinate sn-glycerol 3-phosphate. Position 141 (Ala-141) interacts with NADPH. Sn-glycerol 3-phosphate is bound by residues Lys-192, Asp-248, Ser-258, Arg-259, and Asn-260. Lys-192 serves as the catalytic Proton acceptor. An NADPH-binding site is contributed by Arg-259. NADPH contacts are provided by Leu-283 and Glu-285.

This sequence belongs to the NAD-dependent glycerol-3-phosphate dehydrogenase family.

The protein resides in the cytoplasm. The catalysed reaction is sn-glycerol 3-phosphate + NAD(+) = dihydroxyacetone phosphate + NADH + H(+). It catalyses the reaction sn-glycerol 3-phosphate + NADP(+) = dihydroxyacetone phosphate + NADPH + H(+). The protein operates within membrane lipid metabolism; glycerophospholipid metabolism. Its function is as follows. Catalyzes the reduction of the glycolytic intermediate dihydroxyacetone phosphate (DHAP) to sn-glycerol 3-phosphate (G3P), the key precursor for phospholipid synthesis. This chain is Glycerol-3-phosphate dehydrogenase [NAD(P)+], found in Rickettsia prowazekii (strain Madrid E).